The following is a 329-amino-acid chain: 7,8-didemethyl-8-hydroxy-5-deazariboflavin synthase (329 aa).

One can recognise a Radical SAM core domain in the interval 1–235 (MFIPVTNICR…SDVSVQVAPN (235 aa)). Residues C9, C13, and C16 each coordinate [4Fe-4S] cluster.

The protein belongs to the radical SAM superfamily. CofG family. As to quaternary structure, consists of two subunits, CofG and CofH. The cofactor is [4Fe-4S] cluster.

The enzyme catalyses 5-amino-5-(4-hydroxybenzyl)-6-(D-ribitylimino)-5,6-dihydrouracil + S-adenosyl-L-methionine = 7,8-didemethyl-8-hydroxy-5-deazariboflavin + 5'-deoxyadenosine + L-methionine + NH4(+) + H(+). It functions in the pathway cofactor biosynthesis; coenzyme F0 biosynthesis. In terms of biological role, catalyzes the radical-mediated synthesis of 7,8-didemethyl-8-hydroxy-5-deazariboflavin from 5-amino-5-(4-hydroxybenzyl)-6-(D-ribitylimino)-5,6-dihydrouracil. The sequence is that of 7,8-didemethyl-8-hydroxy-5-deazariboflavin synthase from Methanosarcina acetivorans (strain ATCC 35395 / DSM 2834 / JCM 12185 / C2A).